A 636-amino-acid chain; its full sequence is Cysteine-rich receptor-like protein kinase 24 (636 aa).

Residues 1 to 20 (MVKFLVIFWFVVISFSHVSA) form the signal peptide. Gnk2-homologous domains follow at residues 21–124 (QVCL…NRSF) and 130–235 (MEIL…LYPF). The Extracellular portion of the chain corresponds to 21-254 (QVCLERSGFF…RQKDGKSIST (234 aa)). N-linked (GlcNAc...) asparagine glycosylation is found at N33, N50, N98, N101, N121, N137, N145, and N197. The helical transmembrane segment at 255–275 (GAIVAIIVVPILLLALGVGLW) threads the bilayer. Over 276 to 636 (KRRKAYKTKT…SVSVTCVSPR (361 aa)) the chain is Cytoplasmic. Residues 312 to 585 (FHNVNKLGHG…TMSTVFHMLT (274 aa)) enclose the Protein kinase domain. ATP is bound by residues 318-326 (LGHGGFGEV) and K340. D437 (proton acceptor) is an active-site residue.

This sequence belongs to the protein kinase superfamily. Ser/Thr protein kinase family. CRK subfamily.

The protein localises to the membrane. The catalysed reaction is L-seryl-[protein] + ATP = O-phospho-L-seryl-[protein] + ADP + H(+). It catalyses the reaction L-threonyl-[protein] + ATP = O-phospho-L-threonyl-[protein] + ADP + H(+). The polypeptide is Cysteine-rich receptor-like protein kinase 24 (CRK24) (Arabidopsis thaliana (Mouse-ear cress)).